Here is a 566-residue protein sequence, read N- to C-terminus: KsdD-like steroid dehydrogenase MT0809 (566 aa).

Position 23 to 54 (23 to 54 (DAIVVGAGLAGLVAACELADRGLRVLILDQEN)) interacts with FAD.

It belongs to the FAD-dependent oxidoreductase 2 family. FAD is required as a cofactor.

Its pathway is lipid metabolism; steroid biosynthesis. Functionally, able to catalyze the elimination of the C-1 and C-2 hydrogen atoms of the A-ring from the polycyclic ring structure of 3-ketosteroids. The protein is KsdD-like steroid dehydrogenase MT0809 of Mycobacterium tuberculosis (strain CDC 1551 / Oshkosh).